Here is a 423-residue protein sequence, read N- to C-terminus: Gamma-glutamyl phosphate reductase (423 aa).

It belongs to the gamma-glutamyl phosphate reductase family.

The protein resides in the cytoplasm. It catalyses the reaction L-glutamate 5-semialdehyde + phosphate + NADP(+) = L-glutamyl 5-phosphate + NADPH + H(+). It participates in amino-acid biosynthesis; L-proline biosynthesis; L-glutamate 5-semialdehyde from L-glutamate: step 2/2. In terms of biological role, catalyzes the NADPH-dependent reduction of L-glutamate 5-phosphate into L-glutamate 5-semialdehyde and phosphate. The product spontaneously undergoes cyclization to form 1-pyrroline-5-carboxylate. This is Gamma-glutamyl phosphate reductase from Burkholderia thailandensis (strain ATCC 700388 / DSM 13276 / CCUG 48851 / CIP 106301 / E264).